Reading from the N-terminus, the 564-residue chain is Threonine--tRNA ligase (564 aa).

The segment at aspartate 167–proline 464 is catalytic. Zn(2+) contacts are provided by cysteine 260, histidine 311, and histidine 441.

The protein belongs to the class-II aminoacyl-tRNA synthetase family. As to quaternary structure, homodimer. Requires Zn(2+) as cofactor.

The protein resides in the cytoplasm. The enzyme catalyses tRNA(Thr) + L-threonine + ATP = L-threonyl-tRNA(Thr) + AMP + diphosphate + H(+). In terms of biological role, catalyzes the attachment of threonine to tRNA(Thr) in a two-step reaction: L-threonine is first activated by ATP to form Thr-AMP and then transferred to the acceptor end of tRNA(Thr). Also edits incorrectly charged L-seryl-tRNA(Thr). The polypeptide is Threonine--tRNA ligase (Mycoplasma genitalium (strain ATCC 33530 / DSM 19775 / NCTC 10195 / G37) (Mycoplasmoides genitalium)).